The sequence spans 515 residues: NADH-ubiquinone oxidoreductase chain 2 (515 aa).

A run of 5 helical transmembrane segments spans residues 63–83, 250–270, 299–319, 356–376, and 379–399; these read WPIGIAAFGLCLLFLIKNSGS, VFIYGSYGATLQQIFFFCSIA, FVLVLMWNREGIQSLLIGLFI, AITFSITMFSYAGIPPLAGFC, and FYLFFAALGCGAYFLAPVGVV.

It belongs to the complex I subunit 2 family.

It is found in the mitochondrion inner membrane. It carries out the reaction a ubiquinone + NADH + 5 H(+)(in) = a ubiquinol + NAD(+) + 4 H(+)(out). Functionally, core subunit of the mitochondrial membrane respiratory chain NADH dehydrogenase (Complex I) that is believed to belong to the minimal assembly required for catalysis. Complex I functions in the transfer of electrons from NADH to the respiratory chain. The immediate electron acceptor for the enzyme is believed to be ubiquinone. The chain is NADH-ubiquinone oxidoreductase chain 2 (ND2) from Beta vulgaris (Sugar beet).